A 534-amino-acid polypeptide reads, in one-letter code: Lariat debranching enzyme (534 aa).

Residues C8, H10, D39, and N84 each contribute to the a divalent metal cation site. Positions 124-154 are lariat recognition loop; the sequence is SGIFKGHDFLRGHHEFPPYTDSTCRSVYHVR. Positions 174, 226, and 228 each coordinate a divalent metal cation. Disordered regions lie at residues 242–275 and 501–534; these read KLGD…PPPS and TETP…AQED.

The protein belongs to the lariat debranching enzyme family. It depends on Fe(2+) as a cofactor. Requires Zn(2+) as cofactor. Mn(2+) is required as a cofactor.

The protein localises to the nucleus. With respect to regulation, active in presence of diverse metals including Fe(2+), Zn(2+), Mn(2+). Binds two metal cations in two adjacent alpha and beta metal-binding pockets. Functionally, cleaves the 2'-5' phosphodiester linkage at the branch point of lariat intron pre-mRNAs after splicing and converts them into linear molecules that are subsequently degraded. It thereby facilitates ribonucleotide turnover. The polypeptide is Lariat debranching enzyme (ldbr) (Drosophila melanogaster (Fruit fly)).